Here is a 410-residue protein sequence, read N- to C-terminus: Magnesium transporter NIPA3 (410 aa).

The Extracellular segment spans residues 1 to 67 (MGAQVRLPPG…ISANVENKYS (67 aa)). N-linked (GlcNAc...) asparagine glycans are attached at residues Asn25, Asn35, and Asn50. The helical transmembrane segment at 68–88 (LYVGLVLAVSSSIFIGSSFIL) threads the bilayer. Residues 89-114 (KKKGLLQLASKGITRAGQGGHSYLKE) lie on the Cytoplasmic side of the membrane. The chain crosses the membrane as a helical span at residues 115–135 (WLWWVGLLSMGVGEAANFAAY). Position 136 (Ala136) is a topological domain, extracellular. The helical transmembrane segment at 137–157 (FAPATLVTPLGALSVLISAIL) threads the bilayer. Topologically, residues 158 to 165 (SSYFLNEH) are cytoplasmic. The helical transmembrane segment at 166-186 (LNIHGKIGCILSILGSTVMVI) threads the bilayer. The Extracellular portion of the chain corresponds to 187–207 (HAPQEEEVTSLHEMEMKLRDP). A helical transmembrane segment spans residues 208-228 (GFISFAVIVTVISLVLILIVA). At 229-233 (PKKGQ) the chain is on the cytoplasmic side. The chain crosses the membrane as a helical span at residues 234–254 (TNILVYISICSLIGAFSVSSV). The Extracellular portion of the chain corresponds to 255–273 (KGLGIAIKELIEWKPVYKH). A helical membrane pass occupies residues 274–294 (PLVFVLLAVLVLSVTTQINYL). Topologically, residues 295 to 304 (NKALDTFNTS) are cytoplasmic. The helical transmembrane segment at 305 to 325 (IVTPIYYVFFTSMVVTCSAIL) threads the bilayer. Topologically, residues 326-336 (FQEWYGMTAGD) are extracellular. A helical transmembrane segment spans residues 337–357 (IIGTLSGFFTIIIGIFLLHAF). The Cytoplasmic segment spans residues 358-410 (KNTDITWSELTSTAKKEAVSLNVSENNYVLLENLECSAPGYNDDVTLFSRTDD).

Belongs to the NIPA family.

It is found in the golgi apparatus membrane. It carries out the reaction Mg(2+)(in) = Mg(2+)(out). Its function is as follows. Acts as a Mg(2+) transporter. Can also transport other divalent cations such as Fe(2+), Sr(2+), Ba(2+), Mn(2+), Cu(2+) and Co(2+) but to a much less extent than Mg(2+). The sequence is that of Magnesium transporter NIPA3 (NIPAL1) from Pongo abelii (Sumatran orangutan).